The primary structure comprises 579 residues: XK-related protein 7 (579 aa).

Residues 1–18 (MAAKSDGAAASASPDPEG) show a composition bias toward low complexity. Positions 1-40 (MAAKSDGAAASASPDPEGAAGGARGSAGGRGEAAAAAGPP) are disordered. The span at 19 to 31 (AAGGARGSAGGRG) shows a compositional bias: gly residues. 2 helical membrane-spanning segments follow: residues 59 to 79 (WVLC…WLAA) and 89 to 109 (YFSL…LLSF). The segment at 146-165 (GAFRTKEGSPEPGPQPAPSS) is disordered. A run of 5 helical transmembrane segments spans residues 260 to 280 (LLPA…LASY), 314 to 334 (GLAF…FIVA), 355 to 375 (WEEI…WFNV), 384 to 404 (MTLY…FWYS), and 415 to 435 (LIMV…MCVY). Positions 466 to 510 (ADAITSPPRSLPRTTGAERDGASAGERAGTPTPPVFQVRPGLPPT) are disordered.

It belongs to the XK family.

It localises to the cell membrane. The sequence is that of XK-related protein 7 from Homo sapiens (Human).